A 294-amino-acid chain; its full sequence is NAD kinase (294 aa).

D74 (proton acceptor) is an active-site residue. Residues 74–75 (DG), 148–149 (NE), H159, R176, D178, 189–194 (TAYSLS), and Q249 contribute to the NAD(+) site.

Belongs to the NAD kinase family. It depends on a divalent metal cation as a cofactor.

The protein localises to the cytoplasm. The catalysed reaction is NAD(+) + ATP = ADP + NADP(+) + H(+). In terms of biological role, involved in the regulation of the intracellular balance of NAD and NADP, and is a key enzyme in the biosynthesis of NADP. Catalyzes specifically the phosphorylation on 2'-hydroxyl of the adenosine moiety of NAD to yield NADP. The chain is NAD kinase from Vibrio cholerae serotype O1 (strain ATCC 39541 / Classical Ogawa 395 / O395).